Reading from the N-terminus, the 851-residue chain is DNA mismatch repair protein MutS (851 aa).

602 to 609 (GPNMSGKS) serves as a coordination point for ATP.

The protein belongs to the DNA mismatch repair MutS family.

Its function is as follows. This protein is involved in the repair of mismatches in DNA. It is possible that it carries out the mismatch recognition step. This protein has a weak ATPase activity. The polypeptide is DNA mismatch repair protein MutS (Streptococcus pyogenes serotype M12 (strain MGAS2096)).